Reading from the N-terminus, the 81-residue chain is Large ribosomal subunit protein bL28 (81 aa).

This sequence belongs to the bacterial ribosomal protein bL28 family.

This Gloeobacter violaceus (strain ATCC 29082 / PCC 7421) protein is Large ribosomal subunit protein bL28.